A 352-amino-acid chain; its full sequence is MIKVGIVGGTGYTGVELLRLLAQHPEVELTAITSRTEAGMPVAEMFPSLRGRVALKFTTPDEAKLNECDVVFFATPHGVAMAQAKELLANGVKVLDLAADFRLKDVKEFAKWYGMEHNCPEILAEAVYGLPEINRDAIKKARVVGLAGCYPTSVQLGLAPLLSPKSTGGKHLIDGTHIISDSKSGTSGAGRKAEIGTLLSEASDNFKAYSVKGHRHLPEIEQGLKAIAGHDQIGLTFVPHLTPMIRGIHSTLYVRLTEAGKDVDYQKLYENFYKDEPFVDVMPAGSHPETRSVRGSNGIRIAIHRPGGGDTLVILVVEDNLVKGASGQGVQCMNLMFGLPETTGLTQIAVSP.

The active site involves C149.

The protein belongs to the NAGSA dehydrogenase family. Type 1 subfamily.

The protein resides in the cytoplasm. The catalysed reaction is N-acetyl-L-glutamate 5-semialdehyde + phosphate + NADP(+) = N-acetyl-L-glutamyl 5-phosphate + NADPH + H(+). It participates in amino-acid biosynthesis; L-arginine biosynthesis; N(2)-acetyl-L-ornithine from L-glutamate: step 3/4. In terms of biological role, catalyzes the NADPH-dependent reduction of N-acetyl-5-glutamyl phosphate to yield N-acetyl-L-glutamate 5-semialdehyde. The chain is N-acetyl-gamma-glutamyl-phosphate reductase from Polynucleobacter asymbioticus (strain DSM 18221 / CIP 109841 / QLW-P1DMWA-1) (Polynucleobacter necessarius subsp. asymbioticus).